The chain runs to 1404 residues: Clustered mitochondria protein homolog (1404 aa).

The region spanning 357-646 is the Clu domain; sequence HTHHADALRS…RLNPVDINWL (290 aa). Residues 528-540 show a composition bias toward acidic residues; the sequence is ADELPEADGETTE. 4 disordered regions span residues 528-561, 706-735, 996-1046, and 1337-1372; these read ADEL…SNKA, DAKA…ERLD, GCHG…ARAT, and SERQ…GNGT. Over residues 706 to 723 the composition is skewed to basic and acidic residues; it reads DAKAKEAASKEDGEKTEA. Low complexity-rich tracts occupy residues 1021–1046 and 1358–1372; these read NEQQ…ARAT and AAIT…GNGT.

This sequence belongs to the CLU family. May associate with the eukaryotic translation initiation factor 3 (eIF-3) complex.

It localises to the cytoplasm. Its function is as follows. mRNA-binding protein involved in proper cytoplasmic distribution of mitochondria. The protein is Clustered mitochondria protein homolog of Mycosarcoma maydis (Corn smut fungus).